The following is a 388-amino-acid chain: GTPase Obg (388 aa).

The 159-residue stretch at 1–159 (MKFVDEAVIR…RSLKLELLLL (159 aa)) folds into the Obg domain. One can recognise an OBG-type G domain in the interval 160–333 (ADVGLLGMPN…LALKLLDYIA (174 aa)). GTP is bound by residues 166–173 (GMPNAGKS), 191–195 (FTTLV), 213–216 (DIPG), 283–286 (NKTD), and 314–316 (SAY). Serine 173 and threonine 193 together coordinate Mg(2+).

This sequence belongs to the TRAFAC class OBG-HflX-like GTPase superfamily. OBG GTPase family. Monomer. Mg(2+) serves as cofactor.

It localises to the cytoplasm. An essential GTPase which binds GTP, GDP and possibly (p)ppGpp with moderate affinity, with high nucleotide exchange rates and a fairly low GTP hydrolysis rate. Plays a role in control of the cell cycle, stress response, ribosome biogenesis and in those bacteria that undergo differentiation, in morphogenesis control. This is GTPase Obg from Shewanella putrefaciens (strain CN-32 / ATCC BAA-453).